Here is a 279-residue protein sequence, read N- to C-terminus: Putative pyruvate, phosphate dikinase regulatory protein (279 aa).

Residue 153–160 (GVSRTSKT) participates in ADP binding.

Belongs to the pyruvate, phosphate/water dikinase regulatory protein family. PDRP subfamily.

The enzyme catalyses N(tele)-phospho-L-histidyl/L-threonyl-[pyruvate, phosphate dikinase] + ADP = N(tele)-phospho-L-histidyl/O-phospho-L-threonyl-[pyruvate, phosphate dikinase] + AMP + H(+). It catalyses the reaction N(tele)-phospho-L-histidyl/O-phospho-L-threonyl-[pyruvate, phosphate dikinase] + phosphate + H(+) = N(tele)-phospho-L-histidyl/L-threonyl-[pyruvate, phosphate dikinase] + diphosphate. In terms of biological role, bifunctional serine/threonine kinase and phosphorylase involved in the regulation of the pyruvate, phosphate dikinase (PPDK) by catalyzing its phosphorylation/dephosphorylation. This Rhodopseudomonas palustris (strain ATCC BAA-98 / CGA009) protein is Putative pyruvate, phosphate dikinase regulatory protein.